Consider the following 258-residue polypeptide: Protein SAWADEE HOMEODOMAIN HOMOLOG 1 (258 aa).

Positions 138–244 are SAWADEE domain; sequence AWYDVSSFLT…LVRYELDNTE (107 aa). Residues Cys191, His225, Cys230, and Cys232 each contribute to the Zn(2+) site.

In terms of assembly, associates with the RNA polymerase IV (Pol IV) complex. Interacts with NRPD1, NRPD2, NRPD3, NRPD3B, CLSY1 and CLSY2.

The protein localises to the nucleus. Its function is as follows. Involved in RNA-directed DNA methylation (RdDM). Required for the silencing of some endogenous RdDM targets and accumulation of 24-nt siRNAs, but not for the production of Pol V-dependent transcripts. Functions in transcriptional silencing through both DNA methylation-dependent and -independent pathways. Required for both maintenance and de-novo DNA methylation. Plays a role in the recruitment of Pol IV to genomic regions associated with K9 methylated histone H3 that are targets for RdDM. The chain is Protein SAWADEE HOMEODOMAIN HOMOLOG 1 (SHH1) from Arabidopsis thaliana (Mouse-ear cress).